The primary structure comprises 196 residues: Small ribosomal subunit protein uS4c (196 aa).

The 62-residue stretch at 89-150 (MRLDNIVFRL…NQRSKRLVQN (62 aa)) folds into the S4 RNA-binding domain.

This sequence belongs to the universal ribosomal protein uS4 family. Part of the 30S ribosomal subunit. Contacts protein S5. The interaction surface between S4 and S5 is involved in control of translational fidelity.

It localises to the plastid. Its subcellular location is the chloroplast. One of the primary rRNA binding proteins, it binds directly to 16S rRNA where it nucleates assembly of the body of the 30S subunit. Functionally, with S5 and S12 plays an important role in translational accuracy. The sequence is that of Small ribosomal subunit protein uS4c (rps4) from Eleusine indica (Goosegrass).